A 262-amino-acid chain; its full sequence is Ribosomal RNA small subunit methyltransferase G (262 aa).

G72, L77, and R142 together coordinate S-adenosyl-L-methionine. Positions 212–262 (RSSQLSRAEGRKGRGDGERHDGRQVRRTARDSRRSREVDRDQPTRGQSRST) are disordered. The span at 219-254 (AEGRKGRGDGERHDGRQVRRTARDSRRSREVDRDQP) shows a compositional bias: basic and acidic residues.

This sequence belongs to the methyltransferase superfamily. RNA methyltransferase RsmG family.

The protein localises to the cytoplasm. Its function is as follows. Specifically methylates the N7 position of guanine in position 518 of 16S rRNA. The polypeptide is Ribosomal RNA small subunit methyltransferase G (Frankia alni (strain DSM 45986 / CECT 9034 / ACN14a)).